The chain runs to 353 residues: Rhodopsin (353 aa).

Over 1-36 the chain is Extracellular; sequence MNGTEGPYFYIPMVNTTGIVRSPYEYPQYYLVNPAA. N-linked (GlcNAc...) asparagine glycans are attached at residues Asn-2 and Asn-15. The helical transmembrane segment at 37 to 61 threads the bilayer; it reads YAALGAYMFLLILLGFPINFLTLYV. Residues 62–73 lie on the Cytoplasmic side of the membrane; that stretch reads TIEHKKLRTPLN. The chain crosses the membrane as a helical span at residues 74 to 96; it reads YILLNLAVANLFMVFGGFTTTMY. Over 97 to 110 the chain is Extracellular; it reads TSMHGYFVLGRLGC. Cys-110 and Cys-187 are disulfide-bonded. The helical transmembrane segment at 111-133 threads the bilayer; sequence NLEGFFATLGGEIALWSLVVLAV. Residues 134 to 136 carry the 'Ionic lock' involved in activated form stabilization motif; it reads ERW. Over 134–152 the chain is Cytoplasmic; it reads ERWMVVCKPISNFRFGENH. The chain crosses the membrane as a helical span at residues 153-173; that stretch reads AIMGLAFTWVMASACAVPPLV. The Extracellular portion of the chain corresponds to 174–202; it reads GWSRYIPEGMQCSCGIDYYTRAEGFNNES. An N-linked (GlcNAc...) asparagine glycan is attached at Asn-200. The helical transmembrane segment at 203 to 224 threads the bilayer; the sequence is FVIYMFVCHFLIPLVVVFFCYG. Topologically, residues 225–252 are cytoplasmic; that stretch reads RLLCAVKEAAAAQQESETTQRAEREVSR. The helical transmembrane segment at 253–274 threads the bilayer; it reads MVVIMVVAFLICWCPYAGVAWY. The Extracellular portion of the chain corresponds to 275–286; that stretch reads IFTHQGSEFGPL. The chain crosses the membrane as a helical span at residues 287–308; that stretch reads FMTFPAFFAKSSSIYNPMIYIC. Lys-296 carries the N6-(retinylidene)lysine modification. Residues 309–353 lie on the Cytoplasmic side of the membrane; the sequence is MNKQFRHCMITTLCCGKNPFEEEEGASTTSKTEASSVSSSSVSPA. S-palmitoyl cysteine attachment occurs at residues Cys-322 and Cys-323. Residues 330-353 form a disordered region; it reads EEEGASTTSKTEASSVSSSSVSPA. Positions 334–353 are enriched in low complexity; the sequence is ASTTSKTEASSVSSSSVSPA.

This sequence belongs to the G-protein coupled receptor 1 family. Opsin subfamily. Post-translationally, phosphorylated on some or all of the serine and threonine residues present in the C-terminal region. Contains one covalently linked retinal chromophore.

The protein resides in the membrane. The protein localises to the cell projection. It is found in the cilium. It localises to the photoreceptor outer segment. Photoreceptor required for image-forming vision at low light intensity. While most salt water fish species use retinal as chromophore, most freshwater fish use 3-dehydroretinal, or a mixture of retinal and 3-dehydroretinal. Light-induced isomerization of 11-cis to all-trans retinal triggers a conformational change that activates signaling via G-proteins. Subsequent receptor phosphorylation mediates displacement of the bound G-protein alpha subunit by arrestin and terminates signaling. This Mugil cephalus (Flathead mullet) protein is Rhodopsin (rho).